The sequence spans 362 residues: MTPTPDAQAARELIRQAVSIPSLSGEEQAIAAFLRDWMARRGFDAQVDEAGNAVGVRGSGPLTVALLGHMDTVPGDIPVRVDEAGVLHGRGSVDAKGSLCTFIAAVSALPPEALSAARFVCIGATEEEAPSSKGARYAMRQHRPDFVLIGEPSGWAGLTLGYKGRLVAKVRVEKDNFHTAGDGTSAADDLTLGWQRVREWAAGFAPADSGGGGIFDRVQVTLQDLGSSGDGLTQRAWATIGLRLPPALAPYQAEEAIEQAFAGLGADLTFTGHESAVRHPKDNALTRALRVAIREQGGTPTFKVKTGTSDMNVVAELWPVPTLAYGPGDSALDHTPEERLDLAEYDRAVAVLTSALTRLVGG.

A Zn(2+)-binding site is contributed by H69. D71 is a catalytic residue. D94 is a binding site for Zn(2+). E127 functions as the Proton acceptor in the catalytic mechanism. E128, E151, and H334 together coordinate Zn(2+).

This sequence belongs to the peptidase M20A family. LysK subfamily. Zn(2+) serves as cofactor. Requires Co(2+) as cofactor.

The protein resides in the cytoplasm. It catalyses the reaction [amino-group carrier protein]-C-terminal-gamma-(L-lysyl)-L-glutamate + H2O = [amino-group carrier protein]-C-terminal-L-glutamate + L-lysine. It participates in amino-acid biosynthesis; L-lysine biosynthesis via AAA pathway; L-lysine from L-alpha-aminoadipate (Thermus route): step 5/5. Catalyzes the release of L-lysine from [LysW]-gamma-L-lysine. The sequence is that of [LysW]-lysine hydrolase from Deinococcus radiodurans (strain ATCC 13939 / DSM 20539 / JCM 16871 / CCUG 27074 / LMG 4051 / NBRC 15346 / NCIMB 9279 / VKM B-1422 / R1).